Consider the following 318-residue polypeptide: Transcriptional regulator NovG (318 aa).

A compositionally biased stretch (polar residues) spans 146–156; the sequence is VASLRSSSTAG. Residues 146 to 176 are disordered; it reads VASLRSSSTAGTVGRRTGQDGRSRPNDGTDG. Over residues 162–176 the composition is skewed to basic and acidic residues; the sequence is TGQDGRSRPNDGTDG.

It belongs to the ParB family.

Functionally, transcription regulator that specifically activates expression of genes involved in the novobiocin biosynthesis pathway. Binds 5'-GTTCRACTG(N)(11)CRGTYGAAC-3' DNA sequence. This Streptomyces niveus (Streptomyces spheroides) protein is Transcriptional regulator NovG (novG).